A 1161-amino-acid polypeptide reads, in one-letter code: BMP-2-inducible protein kinase (1161 aa).

Residues M1 to G20 are disordered. A Phosphoserine modification is found at S14. The Protein kinase domain maps to V51–F316. ATP contacts are provided by residues L57–V65 and K79. Catalysis depends on D180, which acts as the Proton acceptor. 4 disordered regions span residues T358–Q439, L453–L495, T610–D630, and E655–L832. Residues I361–T394 show a composition bias toward polar residues. Low complexity-rich tracts occupy residues L422–Q439 and Q460–Q485. Residues T610–P619 show a composition bias toward polar residues. S689 bears the Phosphoserine mark. Composition is skewed to polar residues over residues S697–S718 and K726–K735. S742 carries the phosphoserine modification. The segment covering E755–P779 has biased composition (acidic residues). Positions E798–Y813 are enriched in basic and acidic residues. Phosphoserine occurs at positions 817 and 818. T834 is subject to Phosphothreonine. S928 carries the post-translational modification Phosphoserine. Residues S965 to F1035 are disordered. The segment covering V970 to R984 has biased composition (basic residues). The segment covering T1000 to T1011 has biased composition (low complexity). Phosphoserine is present on residues S1029, S1031, S1032, S1039, S1041, S1076, S1107, and S1111. Over residues T1137 to P1146 the composition is skewed to polar residues. Residues T1137–Q1161 are disordered.

The protein belongs to the protein kinase superfamily. Ser/Thr protein kinase family. In terms of processing, autophosphorylated.

It localises to the nucleus. The catalysed reaction is L-seryl-[protein] + ATP = O-phospho-L-seryl-[protein] + ADP + H(+). It carries out the reaction L-threonyl-[protein] + ATP = O-phospho-L-threonyl-[protein] + ADP + H(+). May be involved in osteoblast differentiation. The chain is BMP-2-inducible protein kinase (BMP2K) from Homo sapiens (Human).